The chain runs to 71 residues: Small ribosomal subunit protein bS21 (71 aa).

Residues 48-59 (EKASLAKRHAKR) are compositionally biased toward basic residues. The tract at residues 48-71 (EKASLAKRHAKRNARENARNTRLY) is disordered. A compositionally biased stretch (basic and acidic residues) spans 60–71 (NARENARNTRLY).

This sequence belongs to the bacterial ribosomal protein bS21 family.

This Actinobacillus pleuropneumoniae serotype 5b (strain L20) protein is Small ribosomal subunit protein bS21.